The sequence spans 253 residues: Imidazole glycerol phosphate synthase subunit HisF (253 aa).

Catalysis depends on residues D11 and D130.

Belongs to the HisA/HisF family. In terms of assembly, heterodimer of HisH and HisF.

It is found in the cytoplasm. The enzyme catalyses 5-[(5-phospho-1-deoxy-D-ribulos-1-ylimino)methylamino]-1-(5-phospho-beta-D-ribosyl)imidazole-4-carboxamide + L-glutamine = D-erythro-1-(imidazol-4-yl)glycerol 3-phosphate + 5-amino-1-(5-phospho-beta-D-ribosyl)imidazole-4-carboxamide + L-glutamate + H(+). The protein operates within amino-acid biosynthesis; L-histidine biosynthesis; L-histidine from 5-phospho-alpha-D-ribose 1-diphosphate: step 5/9. In terms of biological role, IGPS catalyzes the conversion of PRFAR and glutamine to IGP, AICAR and glutamate. The HisF subunit catalyzes the cyclization activity that produces IGP and AICAR from PRFAR using the ammonia provided by the HisH subunit. This Opitutus terrae (strain DSM 11246 / JCM 15787 / PB90-1) protein is Imidazole glycerol phosphate synthase subunit HisF.